A 250-amino-acid chain; its full sequence is MQISSRSGFGYFSYGIRLALTPGIRRFVVLPLLANIILVGGAMYYLFSHLDTWISEWIGQLPSFLSWLSYVLWPLLALTILATFSYFFSTLANFIASPFNGLLAEKVEQHLSGERIGEEGVWALVKDVPRILSREWRKLLYVLPKALGLFLLLLIPALGQTLGPIAWFLFTAWMLAIQYCDYPFDNHKISFHDMRNTLKQNQSKAYGFGMLVAFFTSIPIVNLFIVPVAVCGATAMWVMEFKIQHSPLRQ.

The next 4 membrane-spanning stretches (helical) occupy residues 27–47, 64–84, 150–170, and 210–230; these read FVVLPLLANIILVGGAMYYLF, FLSWLSYVLWPLLALTILATF, FLLLLIPALGQTLGPIAWFLF, and MLVAFFTSIPIVNLFIVPVAV.

It belongs to the CysZ family.

The protein resides in the cell inner membrane. High affinity, high specificity proton-dependent sulfate transporter, which mediates sulfate uptake. Provides the sulfur source for the cysteine synthesis pathway. The sequence is that of Sulfate transporter CysZ from Vibrio cholerae serotype O1 (strain ATCC 39315 / El Tor Inaba N16961).